Here is a 408-residue protein sequence, read N- to C-terminus: Imidazolonepropionase (408 aa).

H73 and H75 together coordinate Fe(3+). Zn(2+) contacts are provided by H73 and H75. 4-imidazolone-5-propanoate contacts are provided by R82, Y145, and H178. Y145 is a binding site for N-formimidoyl-L-glutamate. Position 243 (H243) interacts with Fe(3+). H243 is a Zn(2+) binding site. Residue Q246 coordinates 4-imidazolone-5-propanoate. D318 lines the Fe(3+) pocket. D318 is a binding site for Zn(2+). Positions 320 and 322 each coordinate N-formimidoyl-L-glutamate. S323 contributes to the 4-imidazolone-5-propanoate binding site.

It belongs to the metallo-dependent hydrolases superfamily. HutI family. Zn(2+) serves as cofactor. The cofactor is Fe(3+).

The protein localises to the cytoplasm. It carries out the reaction 4-imidazolone-5-propanoate + H2O = N-formimidoyl-L-glutamate. It functions in the pathway amino-acid degradation; L-histidine degradation into L-glutamate; N-formimidoyl-L-glutamate from L-histidine: step 3/3. Its function is as follows. Catalyzes the hydrolytic cleavage of the carbon-nitrogen bond in imidazolone-5-propanoate to yield N-formimidoyl-L-glutamate. It is the third step in the universal histidine degradation pathway. This is Imidazolonepropionase from Shewanella sp. (strain MR-4).